A 75-amino-acid chain; its full sequence is UPF0270 protein Pfl01_4103 (75 aa).

Belongs to the UPF0270 family.

The chain is UPF0270 protein Pfl01_4103 from Pseudomonas fluorescens (strain Pf0-1).